Consider the following 289-residue polypeptide: RING-H2 finger protein ATL29 (289 aa).

A helical transmembrane segment spans residues 25-45; the sequence is VILTVILLVFFFIGFFTLYFC. An RING-type; atypical zinc finger spans residues 110–152; it reads CAICLLEFDGDHVLRLLTTCYHVFHQECIDLWFESHRTCPVCR. The disordered stretch occupies residues 179 to 237; the sequence is TSDDEEDDHHRQQTTTQIDTWPSSGQTSSIKKEQNLPEKFSRSHSTGHSIVRNKPEEED. Positions 191–207 are enriched in polar residues; that stretch reads QTTTQIDTWPSSGQTSS. Positions 208–219 are enriched in basic and acidic residues; that stretch reads IKKEQNLPEKFS.

Belongs to the RING-type zinc finger family. ATL subfamily.

The protein localises to the membrane. The enzyme catalyses S-ubiquitinyl-[E2 ubiquitin-conjugating enzyme]-L-cysteine + [acceptor protein]-L-lysine = [E2 ubiquitin-conjugating enzyme]-L-cysteine + N(6)-ubiquitinyl-[acceptor protein]-L-lysine.. The protein operates within protein modification; protein ubiquitination. This is RING-H2 finger protein ATL29 (ATL29) from Arabidopsis thaliana (Mouse-ear cress).